Here is a 425-residue protein sequence, read N- to C-terminus: Aromatic prenyl transferase ptmE (425 aa).

Residues 83-84 (GI) and Glu-92 contribute to the L-tryptophan site. Positions 107, 198, 200, 265, 267, 269, 345, 410, and 414 each coordinate substrate.

The protein belongs to the tryptophan dimethylallyltransferase family. In terms of assembly, homodimer.

It functions in the pathway secondary metabolite biosynthesis. Functionally, aromatic prenyl transferase; part of the gene cluster that mediates the biosynthesis of the indole diterpenes penitrems. The geranylgeranyl diphosphate (GGPP) synthase ptmG catalyzes the first step in penitrem biosynthesis via conversion of farnesyl pyrophosphate and isopentyl pyrophosphate into geranylgeranyl pyrophosphate (GGPP). Condensation of indole-3-glycerol phosphate with GGPP by the prenyl transferase ptmC then forms 3-geranylgeranylindole (3-GGI). Epoxidation by the FAD-dependent monooxygenase ptmM leads to a epoxidized-GGI that is substrate of the terpene cyclase ptmB for cyclization to yield paspaline. Paspaline is subsequently converted to 13-desoxypaxilline by the cytochrome P450 monooxygenase ptmP, the latter being then converted to paxilline by the cytochrome P450 monooxygenase ptmQ. Paxilline is converted to beta-paxitriol via C-10 ketoreduction by the short-chain dehydrogenase ptmH which can be monoprenylated at the C-20 by the indole diterpene prenyltransferase ptmD. A two-step elimination (acetylation and elimination) process performed by the O-acetyltransferase ptmV and ptmI leads to the production of the prenylated form of penijanthine. The FAD-linked oxidoreductase ptmO then converts the prenylated form of penijanthine into PC-M5 which is in turn transformed into PC-M4 by the aromatic dimethylallyltransferase ptmE. Five sequential oxidative transformations performed by the cytochrome P450 monooxygenases ptmK, ptmU, ptmL, ptmN and ptmJ yield the various penitrem compounds. PtmK, ptmU and ptmM are involved in the formation of the key bicyclic ring of penitrem C via the formation of the intermediates secopenitrem D and penitrem D. PtmL catalyzes the epoxidation of penitrem D and C to yield penitrem B and F, respectively. PtmJ catalyzes the last benzylic hydroxylation to convert penitrem B to prenitrem E and penitrem F to penitrem A. This is Aromatic prenyl transferase ptmE from Penicillium ochrochloron.